The primary structure comprises 1316 residues: DNA-directed RNA polymerase subunit beta' (1316 aa).

4 residues coordinate Zn(2+): Cys60, Cys62, Cys75, and Cys78. 3 residues coordinate Mg(2+): Asp535, Asp537, and Asp539. Cys891, Cys968, Cys975, and Cys978 together coordinate Zn(2+).

It belongs to the RNA polymerase beta' chain family. As to quaternary structure, the RNAP catalytic core consists of 2 alpha, 1 beta, 1 beta' and 1 omega subunit. When a sigma factor is associated with the core the holoenzyme is formed, which can initiate transcription. The cofactor is Mg(2+). Requires Zn(2+) as cofactor.

It carries out the reaction RNA(n) + a ribonucleoside 5'-triphosphate = RNA(n+1) + diphosphate. In terms of biological role, DNA-dependent RNA polymerase catalyzes the transcription of DNA into RNA using the four ribonucleoside triphosphates as substrates. This Mycolicibacterium paratuberculosis (strain ATCC BAA-968 / K-10) (Mycobacterium paratuberculosis) protein is DNA-directed RNA polymerase subunit beta'.